The sequence spans 690 residues: Subtilisin-like protease 1 (690 aa).

The signal sequence occupies residues M1–G25. Residues K26–D219 constitute a propeptide, inhibition peptide. Residues E99 to E131 form a disordered region. Low complexity predominate over residues H106–N124. N114 is a glycosylation site (N-linked (GlcNAc...) asparagine). Positions 147, 150, and 152 each coordinate Ca(2+). An N-linked (GlcNAc...) asparagine glycan is attached at N173. G207 is a Ca(2+) binding site. N-linked (GlcNAc...) asparagine glycosylation occurs at N263. 2 disordered regions span residues H266–S286 and N305–K334. Residues N305–S330 show a composition bias toward low complexity. Residues N319 and N324 are each glycosylated (N-linked (GlcNAc...) asparagine). E340 serves as a coordination point for Ca(2+). In terms of domain architecture, Peptidase S8 spans Q345–V663. Intrachain disulfides connect C371/C481 and C460/C477. Residue D374 is the Charge relay system of the active site. 11 residues coordinate Ca(2+): D383, E394, R398, F401, D402, D403, D404, N406, I408, D410, and D411. N419 is a glycosylation site (N-linked (GlcNAc...) asparagine). H430 functions as the Charge relay system in the catalytic mechanism. The Ca(2+) site is built by I441, N444, I446, and V448. N-linked (GlcNAc...) asparagine glycans are attached at residues N490, N503, and N522. C523 and C536 are disulfide-bonded. N605 is a glycosylation site (N-linked (GlcNAc...) asparagine). S608 (charge relay system) is an active-site residue. A glycan (N-linked (GlcNAc...) asparagine) is linked at N677.

It belongs to the peptidase S8 family. Heterodimer between p54 form and prodomain p31; the interaction inhibits p54 catalytic activity. Heterodimer p31-p54 is monomeric at basic pH and dimeric at acidic pH; dimerization is driven by the N-terminal prodomain (p31). Ca(2+) serves as cofactor. The prodomain (p31) is cleaved, probably by autocatalysis, during the transport to or in the Golgi apparatus, and remains non-covalently associated with the p54 form as an inhibitor. p54 is further cleaved into the p47 form. This cleavage is likely occurring in the exoneme prior to egress and is mediated by PMX/plasmepsin X. The p54-to-p47 conversion can be also autocatalytic. Heterodimer p31-p54 is activated by cleavage of prodomain (p31) by the aspartic protease PMX; cleavage by PMX abolishes inhibitory capacity of p31. Primary autocatalytic processing of SUB1 is essential for parasite growth; the p54-to-p47 conversion is dispensable for SUB1 functions in the parasites. In terms of processing, the disulfide bond between Cys-523 and Cys-536 acts as a redox-sensitive disulfide switch. The oxidized form is required for catalytic activity. Post-translationally, the relevance of N-glycosylation is not clear. In an insect expression system, SUB1 glycosylation appears to affect its processing into the active mature form suggesting that SUB1 may not be N-glycosylated in parasites.

Its subcellular location is the secreted. It is found in the parasitophorous vacuole lumen. The enzyme catalyses Hydrolysis of proteins with broad specificity for peptide bonds, and a preference for a large uncharged residue in P1. Hydrolyzes peptide amides.. P54 and probably p47 forms are inhibited by the non-covalent interaction with the cleaved propeptide. Inhibited by subtilisin propeptide-like protein SUB1-ProM. Inhibited by 3,4-dichloroisocoumarin (DCI) and 4-(hydroxymercuri)benzoic acid (pHMB). Partially inhibited by chymostatin, leupeptin, phenylmethylsulfonyl fluoride (PMSF), and 4-(2-aminoethyl)benzenesulfonyl fluoride. Functionally, serine protease which plays an essential role in merozoite invasion of and egress from host erythrocytes by processing and activating various merozoite surface and parasitophorous vacuole proteins. Mediates the proteolytic maturation of serine proteases SERA4, SERA5 and SERA6 just prior to merozoite egress. Prior to merozoite egress, cleaves merozoite surface proteins MSP1, MSP6 and MSP7, which form the MSP1/6/7 complex, and thereby may prime the parasite cell surface for invasion of fresh erythrocytes. Prior to merozoite egress, cleaves MSRP2 converting it to MSRP2 p25 form, and RAP1 converting it to RAP1 p67 form. The protein is Subtilisin-like protease 1 of Plasmodium falciparum.